A 196-amino-acid polypeptide reads, in one-letter code: MNAQCLKKPEEGESSPGTGDKILQRNSLRAISPESSAKLYCCCGVIMVLTVAVVALSVALPATKTEQILINKTYAACPKNWIGVGNKCFYFSEYTSNWTFAQTFCMAQEAQLARFDNEKELNFLKRHMNSSHWIGLHRDSSEHPWRWTDNTEYNNTFLIQGDGECGFLSDNGISSSRDYIPRKWICSRSSNYMLQC.

Residues M1 to K21 are disordered. The Cytoplasmic portion of the chain corresponds to M1–C41. The chain crosses the membrane as a helical; Signal-anchor for type II membrane protein span at residues C42 to A62. At T63–C196 the chain is on the extracellular side. A disulfide bond links C77 and C88. A C-type lectin domain is found at V84–S187. N-linked (GlcNAc...) asparagine glycosylation is present at N97. C105 and C186 are disulfide-bonded.

It is found in the cell membrane. Lectin-type cell surface receptor. The protein is C-type lectin domain family 2 member F (Clec2f) of Mus musculus (Mouse).